We begin with the raw amino-acid sequence, 611 residues long: Acetylcholinesterase (611 aa).

The N-terminal stretch at 1-31 (MRPPWCPLYTPSLAAPILLLLLFLLGGGAEA) is a signal peptide. An intrachain disulfide couples Cys97 to Cys124. Residue Ser231 is the Acyl-ester intermediate of the active site. Residues Cys285 and Cys300 are joined by a disulfide bond. Asn293 is a glycosylation site (N-linked (GlcNAc...) asparagine). The Charge relay system role is filled by Glu362. An N-linked (GlcNAc...) asparagine glycan is attached at Asn378. The cysteines at positions 437 and 557 are disulfide-linked. Catalysis depends on His475, which acts as the Charge relay system. An N-linked (GlcNAc...) asparagine glycan is attached at Asn492.

This sequence belongs to the type-B carboxylesterase/lipase family. As to quaternary structure, interacts with PRIMA1. The interaction with PRIMA1 is required to anchor it to the basal lamina of cells and organize into tetramers. Isoform H generates GPI-anchored dimers; disulfide linked. Isoform T generates multiple structures, ranging from monomers and dimers to collagen-tailed and hydrophobic-tailed forms, in which catalytic tetramers are associated with anchoring proteins that attach them to the basal lamina or to cell membranes. In the collagen-tailed forms, isoform T subunits are associated with a specific collagen, COLQ, which triggers the formation of isoform T tetramers, from monomers and dimers.

Its subcellular location is the synapse. It localises to the secreted. The protein resides in the cell membrane. It catalyses the reaction acetylcholine + H2O = choline + acetate + H(+). Functionally, terminates signal transduction at the neuromuscular junction by rapid hydrolysis of the acetylcholine released into the synaptic cleft. The protein is Acetylcholinesterase (ACHE) of Felis catus (Cat).